A 450-amino-acid polypeptide reads, in one-letter code: Phosphoglucosamine mutase (450 aa).

The active-site Phosphoserine intermediate is the Ser102. Residues Ser102, Asp243, Asp245, and Asp247 each coordinate Mg(2+). Phosphoserine is present on Ser102.

It belongs to the phosphohexose mutase family. Mg(2+) serves as cofactor. In terms of processing, activated by phosphorylation.

It carries out the reaction alpha-D-glucosamine 1-phosphate = D-glucosamine 6-phosphate. In terms of biological role, catalyzes the conversion of glucosamine-6-phosphate to glucosamine-1-phosphate. This chain is Phosphoglucosamine mutase, found in Agrobacterium fabrum (strain C58 / ATCC 33970) (Agrobacterium tumefaciens (strain C58)).